The following is a 380-amino-acid chain: 3-methylitaconate isomerase (380 aa).

Belongs to the PrpF family. As to quaternary structure, homotetramer.

It catalyses the reaction 2-methylene-3-methylsuccinate = dimethylmaleate. Its pathway is cofactor degradation; nicotinate degradation; propanoate and pyruvate from 6-hydroxynicotinate: step 6/8. With respect to regulation, inhibited by oxidized glutathione, p-chloromercuriphenylsulfonic acid and iodoacetic acid. Not inhibited by the chelating agent alpha,alpha-dipyridyl. Activity is slightly increased by EDTA. Not activated by Fe(2+), Mg(2+), Mn(2+) or Ca(2+). Unaffected by K(+), Na(+), NH4(+), Rb(+) or Li(+). Functionally, catalyzes the reversible isomerization of (R)-3-methylitaconate to 2,3-dimethylmaleate. Has very low isomerase activity with itaconate. The sequence is that of 3-methylitaconate isomerase (mii) from Eubacterium barkeri (Clostridium barkeri).